Consider the following 218-residue polypeptide: Cytidylate kinase (218 aa).

An ATP-binding site is contributed by 7 to 15 (GPSASGKSS).

The protein belongs to the cytidylate kinase family. Type 1 subfamily.

The protein resides in the cytoplasm. It catalyses the reaction CMP + ATP = CDP + ADP. The enzyme catalyses dCMP + ATP = dCDP + ADP. The sequence is that of Cytidylate kinase from Borrelia hermsii (strain HS1 / DAH).